Here is a 154-residue protein sequence, read N- to C-terminus: Large ribosomal subunit protein bL17 (154 aa).

The interval 125 to 154 (AASQKSSKQDRAKRVQGSKKNVDAVAESAE) is disordered.

The protein belongs to the bacterial ribosomal protein bL17 family. In terms of assembly, part of the 50S ribosomal subunit. Contacts protein L32.

The chain is Large ribosomal subunit protein bL17 from Chlorobium chlorochromatii (strain CaD3).